The primary structure comprises 306 residues: 2-phospho-L-lactate transferase (306 aa).

Residue D48 participates in 7,8-didemethyl-8-hydroxy-5-deazariboflavin binding.

The protein belongs to the CofD family. Homodimer. Requires Mg(2+) as cofactor.

The enzyme catalyses (2S)-lactyl-2-diphospho-5'-guanosine + 7,8-didemethyl-8-hydroxy-5-deazariboflavin = oxidized coenzyme F420-0 + GMP + H(+). The protein operates within cofactor biosynthesis; coenzyme F420 biosynthesis. In terms of biological role, catalyzes the transfer of the 2-phospholactate moiety from (2S)-lactyl-2-diphospho-5'-guanosine to 7,8-didemethyl-8-hydroxy-5-deazariboflavin (FO) with the formation of oxidized coenzyme F420-0 and GMP. In Methanococcoides burtonii (strain DSM 6242 / NBRC 107633 / OCM 468 / ACE-M), this protein is 2-phospho-L-lactate transferase.